Consider the following 342-residue polypeptide: D-erythrose-4-phosphate dehydrogenase (342 aa).

11-12 (RI) is a binding site for NAD(+). Substrate is bound by residues 153–155 (SCT), R199, 212–213 (TK), and R235. Residue C154 is the Nucleophile of the active site. Position 317 (N317) interacts with NAD(+).

This sequence belongs to the glyceraldehyde-3-phosphate dehydrogenase family. Epd subfamily. As to quaternary structure, homotetramer.

The protein localises to the cytoplasm. The catalysed reaction is D-erythrose 4-phosphate + NAD(+) + H2O = 4-phospho-D-erythronate + NADH + 2 H(+). Its pathway is cofactor biosynthesis; pyridoxine 5'-phosphate biosynthesis; pyridoxine 5'-phosphate from D-erythrose 4-phosphate: step 1/5. Its function is as follows. Catalyzes the NAD-dependent conversion of D-erythrose 4-phosphate to 4-phosphoerythronate. This is D-erythrose-4-phosphate dehydrogenase from Shewanella denitrificans (strain OS217 / ATCC BAA-1090 / DSM 15013).